The following is a 274-amino-acid chain: tRNA pseudouridine synthase A (274 aa).

The active-site Nucleophile is D54. Y112 contacts substrate.

It belongs to the tRNA pseudouridine synthase TruA family. In terms of assembly, homodimer.

It catalyses the reaction uridine(38/39/40) in tRNA = pseudouridine(38/39/40) in tRNA. Formation of pseudouridine at positions 38, 39 and 40 in the anticodon stem and loop of transfer RNAs. The sequence is that of tRNA pseudouridine synthase A from Solidesulfovibrio magneticus (strain ATCC 700980 / DSM 13731 / RS-1) (Desulfovibrio magneticus).